The chain runs to 236 residues: ATP synthase subunit a (236 aa).

Transmembrane regions (helical) follow at residues 17-37, 76-96, 113-133, 170-190, and 196-216; these read WTNLISGTIVFVITFFLLFGL, SFFVFVLFVFLFISNQLGLII, PVVTMTLALCAVTLSHFAGVA, IFGNIYAGELLLKLLAGMAFS, and MIVSLPLEIIWQGFSVFIGAI.

This sequence belongs to the ATPase A chain family. In terms of assembly, F-type ATPases have 2 components, CF(1) - the catalytic core - and CF(0) - the membrane proton channel. CF(1) has five subunits: alpha(3), beta(3), gamma(1), delta(1), epsilon(1). CF(0) has three main subunits: a(1), b(2) and c(9-12). The alpha and beta chains form an alternating ring which encloses part of the gamma chain. CF(1) is attached to CF(0) by a central stalk formed by the gamma and epsilon chains, while a peripheral stalk is formed by the delta and b chains.

The protein resides in the cell membrane. Functionally, key component of the proton channel; it plays a direct role in the translocation of protons across the membrane. This chain is ATP synthase subunit a, found in Limosilactobacillus fermentum (strain NBRC 3956 / LMG 18251) (Lactobacillus fermentum).